The chain runs to 364 residues: D-alanine--D-alanine ligase (364 aa).

Residues 134-344 (KVLLKSFNIP…YESLVDKLIT (211 aa)) enclose the ATP-grasp domain. Residue 167–222 (NNKLNYPVIVKPSVLGSSIGINVAYNVSQIEKYIEEAFEYDLTVVVEKFIKAREIE) coordinates ATP. The Mg(2+) site is built by Asp297, Glu311, and Asn313.

The protein belongs to the D-alanine--D-alanine ligase family. It depends on Mg(2+) as a cofactor. Requires Mn(2+) as cofactor.

The protein localises to the cytoplasm. The enzyme catalyses 2 D-alanine + ATP = D-alanyl-D-alanine + ADP + phosphate + H(+). The protein operates within cell wall biogenesis; peptidoglycan biosynthesis. Its function is as follows. Cell wall formation. The protein is D-alanine--D-alanine ligase of Borrelia recurrentis (strain A1).